The sequence spans 298 residues: Ketohexokinase (298 aa).

The beta-D-fructose site is built by aspartate 15, glycine 41, asparagine 42, and asparagine 45. ATP is bound by residues arginine 108, 226–229 (AEEG), and 255–258 (GAGD). Aspartate 258 provides a ligand contact to beta-D-fructose.

Belongs to the carbohydrate kinase PfkB family. In terms of assembly, homodimer. Most abundant in liver, kidney, gut, spleen and pancreas. Low levels also found in adrenal, muscle, brain and eye.

It carries out the reaction beta-D-fructose + ATP = beta-D-fructose 1-phosphate + ADP + H(+). It participates in carbohydrate metabolism; fructose metabolism. Requires potassium. Inhibition by ADP. Its function is as follows. Catalyzes the phosphorylation of the ketose sugar fructose to fructose-1-phosphate. In Homo sapiens (Human), this protein is Ketohexokinase.